The primary structure comprises 86 residues: Toxin Td2 (86 aa).

The first 20 residues, 1–20 (MTRFVLFLNCFFLICMVVEC), serve as a signal peptide directing secretion. The 63-residue stretch at 21-83 (KEGYLMGADG…TWDRATNTCG (63 aa)) folds into the LCN-type CS-alpha/beta domain. Cystine bridges form between cysteine 31–cysteine 82, cysteine 35–cysteine 57, cysteine 43–cysteine 63, and cysteine 47–cysteine 65. Position 84 is an arginine amide (arginine 84).

Expressed by the venom gland.

The protein localises to the secreted. Its function is as follows. Beta toxins bind voltage-independently at site-4 of sodium channels (Nav) and shift the voltage of activation toward more negative potentials thereby affecting sodium channel activation and promoting spontaneous and repetitive firing. The sequence is that of Toxin Td2 from Tityus discrepans (Venezuelan scorpion).